Reading from the N-terminus, the 87-residue chain is Small ribosomal subunit protein bS20 (87 aa).

Belongs to the bacterial ribosomal protein bS20 family.

Functionally, binds directly to 16S ribosomal RNA. This chain is Small ribosomal subunit protein bS20, found in Shigella flexneri.